A 226-amino-acid polypeptide reads, in one-letter code: Membrane protein (226 aa).

Residues 1-11 are Virion surface-facing; sequence MSNGSIPVDEV. The chain crosses the membrane as a helical span at residues 12 to 32; that stretch reads IEHLRNWNFTWNIILTILLVV. The Intravirion portion of the chain corresponds to 33 to 41; the sequence is LQYGHYKYS. A helical membrane pass occupies residues 42 to 62; that stretch reads VFLYGVKMAILWILWPLVLAL. The Virion surface portion of the chain corresponds to 63–75; the sequence is SLFDAWASFQVNW. The helical transmembrane segment at 76–96 threads the bilayer; it reads VFFAFSILMACITLMLWIMYF. The Intravirion segment spans residues 97–226; that stretch reads VNSIRLWRRT…TDSEKVLHLV (130 aa). The segment at 200 to 216 is interaction with N protein; the sequence is RSKHGDYSAVSNPSAVL.

This sequence belongs to the alphacoronaviruses M protein family. In terms of assembly, homomultimer. Interacts with envelope E protein in the budding compartment of the host cell, which is located between endoplasmic reticulum and the Golgi complex. Forms a complex with HE and S proteins. Interacts with nucleocapsid N protein. This interaction probably participates in RNA packaging into the virus.

It is found in the virion membrane. It localises to the host Golgi apparatus membrane. Functionally, component of the viral envelope that plays a central role in virus morphogenesis and assembly via its interactions with other viral proteins. The sequence is that of Membrane protein from Sus scrofa (Pig).